Consider the following 276-residue polypeptide: Hydroxyethylthiazole kinase (276 aa).

2 residues coordinate ATP: R126 and S172. G199 provides a ligand contact to substrate.

Belongs to the Thz kinase family. Mg(2+) serves as cofactor.

The catalysed reaction is 5-(2-hydroxyethyl)-4-methylthiazole + ATP = 4-methyl-5-(2-phosphooxyethyl)-thiazole + ADP + H(+). Its pathway is cofactor biosynthesis; thiamine diphosphate biosynthesis; 4-methyl-5-(2-phosphoethyl)-thiazole from 5-(2-hydroxyethyl)-4-methylthiazole: step 1/1. Its function is as follows. Catalyzes the phosphorylation of the hydroxyl group of 4-methyl-5-beta-hydroxyethylthiazole (THZ). The polypeptide is Hydroxyethylthiazole kinase (Burkholderia pseudomallei (strain 1106a)).